The chain runs to 410 residues: Serine hydroxymethyltransferase (410 aa).

(6S)-5,6,7,8-tetrahydrofolate is bound by residues Leu-119 and 123-125 (GHL). At Lys-228 the chain carries N6-(pyridoxal phosphate)lysine. 351–353 (SPF) contacts (6S)-5,6,7,8-tetrahydrofolate.

It belongs to the SHMT family. As to quaternary structure, homodimer. The cofactor is pyridoxal 5'-phosphate.

Its subcellular location is the cytoplasm. It catalyses the reaction (6R)-5,10-methylene-5,6,7,8-tetrahydrofolate + glycine + H2O = (6S)-5,6,7,8-tetrahydrofolate + L-serine. Its pathway is one-carbon metabolism; tetrahydrofolate interconversion. The protein operates within amino-acid biosynthesis; glycine biosynthesis; glycine from L-serine: step 1/1. In terms of biological role, catalyzes the reversible interconversion of serine and glycine with tetrahydrofolate (THF) serving as the one-carbon carrier. This reaction serves as the major source of one-carbon groups required for the biosynthesis of purines, thymidylate, methionine, and other important biomolecules. Also exhibits THF-independent aldolase activity toward beta-hydroxyamino acids, producing glycine and aldehydes, via a retro-aldol mechanism. The protein is Serine hydroxymethyltransferase of Alkaliphilus metalliredigens (strain QYMF).